We begin with the raw amino-acid sequence, 420 residues long: Fasciclin-like arabinogalactan protein 4 (420 aa).

The first 28 residues, 1 to 28 (MANVISISHFTLLALPYLLLLLSSTAAA), serve as a signal peptide directing secretion. 2 consecutive FAS1 domains span residues 29-177 (INVT…DSLI) and 205-351 (GINL…SKVL). N-linked (GlcNAc...) asparagine glycans are attached at residues asparagine 30, asparagine 40, asparagine 135, asparagine 154, asparagine 167, asparagine 207, asparagine 312, and asparagine 317. Residues 360 to 388 (SGQPVATAPPQEISLSPESSSEQPSRLVS) are disordered. A compositionally biased stretch (low complexity) spans 368–384 (PPQEISLSPESSSEQPS). Residue serine 396 is the site of GPI-anchor amidated serine attachment. A propeptide spans 397 to 420 (GAVKRPLGFLVLWCWCIAFCYVLV) (removed in mature form).

This sequence belongs to the fasciclin-like AGP family. Expressed in all plant organs and tissues, including guard cells in the leaf.

It localises to the cell membrane. May be a cell surface adhesion protein that is required for normal cell expansion. The sequence is that of Fasciclin-like arabinogalactan protein 4 (FLA4) from Arabidopsis thaliana (Mouse-ear cress).